The following is a 393-amino-acid chain: BEN domain-containing protein 5 (393 aa).

A coiled-coil region spans residues 169–212 (RVLYEELLRSYQQQQQEMKHIQHELERTRKQLVQQAKKLKDYGS). Positions 274–380 (GSGVWVNEEK…EKIMDINKSC (107 aa)) constitute a BEN domain.

In terms of biological role, may act as a transcriptional repressor. This is BEN domain-containing protein 5 (bend5) from Xenopus laevis (African clawed frog).